Reading from the N-terminus, the 132-residue chain is ATP synthase epsilon chain (132 aa).

Belongs to the ATPase epsilon chain family. In terms of assembly, F-type ATPases have 2 components, CF(1) - the catalytic core - and CF(0) - the membrane proton channel. CF(1) has five subunits: alpha(3), beta(3), gamma(1), delta(1), epsilon(1). CF(0) has three main subunits: a, b and c.

Its subcellular location is the cell inner membrane. Its function is as follows. Produces ATP from ADP in the presence of a proton gradient across the membrane. The chain is ATP synthase epsilon chain (atpC) from Aquifex aeolicus (strain VF5).